A 747-amino-acid polypeptide reads, in one-letter code: Pseudouridine-metabolizing bifunctional protein C1861.05 (747 aa).

Residues M1–S379 are pseudouridine-5'-phosphate glycosidase. E61 acts as the Proton donor; for PsiMP glycosidase activity in catalysis. The substrate site is built by K123 and V143. D175 serves as a coordination point for Mn(2+). A substrate-binding site is contributed by S177 to D179. K196 functions as the Nucleophile; for PsiMP glycosidase activity in the catalytic mechanism. Residues K380–K747 are pseudouridine kinase.

It in the N-terminal section; belongs to the pseudouridine-5'-phosphate glycosidase family. In the C-terminal section; belongs to the carbohydrate kinase PfkB family. Requires Mn(2+) as cofactor.

The protein localises to the cytoplasm. The catalysed reaction is D-ribose 5-phosphate + uracil = psi-UMP + H2O. It catalyses the reaction pseudouridine + ATP = psi-UMP + ADP + H(+). Its function is as follows. Bifunctional enzyme that catalyzes the phosphorylation of pseudouridine to pseudouridine 5'-phosphate (PsiMP), and the reversible cleavage of pseudouridine 5'-phosphate to ribose 5-phosphate and uracil. Is involved in a pseudouridine degradation pathway. The chain is Pseudouridine-metabolizing bifunctional protein C1861.05 from Schizosaccharomyces pombe (strain 972 / ATCC 24843) (Fission yeast).